A 507-amino-acid chain; its full sequence is Maturase K (507 aa).

The protein belongs to the intron maturase 2 family. MatK subfamily.

It localises to the plastid. The protein localises to the chloroplast. Usually encoded in the trnK tRNA gene intron. Probably assists in splicing its own and other chloroplast group II introns. This is Maturase K from Asimina triloba (Pawpaw).